Reading from the N-terminus, the 599-residue chain is 2-succinyl-5-enolpyruvyl-6-hydroxy-3-cyclohexene-1-carboxylate synthase (599 aa).

Low complexity predominate over residues 1 to 21 (MTSENPLDPNNAYAAADDAPL). The segment at 1 to 35 (MTSENPLDPNNAYAAADDAPLSEGDPTGAPADSGS) is disordered.

The protein belongs to the TPP enzyme family. MenD subfamily. In terms of assembly, homodimer. Mg(2+) is required as a cofactor. Mn(2+) serves as cofactor. Requires thiamine diphosphate as cofactor.

The enzyme catalyses isochorismate + 2-oxoglutarate + H(+) = 5-enolpyruvoyl-6-hydroxy-2-succinyl-cyclohex-3-ene-1-carboxylate + CO2. The protein operates within quinol/quinone metabolism; 1,4-dihydroxy-2-naphthoate biosynthesis; 1,4-dihydroxy-2-naphthoate from chorismate: step 2/7. Its pathway is quinol/quinone metabolism; menaquinone biosynthesis. Functionally, catalyzes the thiamine diphosphate-dependent decarboxylation of 2-oxoglutarate and the subsequent addition of the resulting succinic semialdehyde-thiamine pyrophosphate anion to isochorismate to yield 2-succinyl-5-enolpyruvyl-6-hydroxy-3-cyclohexene-1-carboxylate (SEPHCHC). The sequence is that of 2-succinyl-5-enolpyruvyl-6-hydroxy-3-cyclohexene-1-carboxylate synthase from Arthrobacter sp. (strain FB24).